Consider the following 383-residue polypeptide: Arginine biosynthesis bifunctional protein ArgJ 1 (383 aa).

The disordered stretch occupies residues 1 to 25 (MTVTAPKGSTGGGCRRGSKESGQPD). Thr-146, Lys-168, Thr-179, Glu-259, Asn-378, and Ser-383 together coordinate substrate. Thr-179 functions as the Nucleophile in the catalytic mechanism.

The protein belongs to the ArgJ family. Heterotetramer of two alpha and two beta chains.

The protein resides in the cytoplasm. The catalysed reaction is N(2)-acetyl-L-ornithine + L-glutamate = N-acetyl-L-glutamate + L-ornithine. It catalyses the reaction L-glutamate + acetyl-CoA = N-acetyl-L-glutamate + CoA + H(+). It functions in the pathway amino-acid biosynthesis; L-arginine biosynthesis; L-ornithine and N-acetyl-L-glutamate from L-glutamate and N(2)-acetyl-L-ornithine (cyclic): step 1/1. It participates in amino-acid biosynthesis; L-arginine biosynthesis; N(2)-acetyl-L-ornithine from L-glutamate: step 1/4. In terms of biological role, catalyzes two activities which are involved in the cyclic version of arginine biosynthesis: the synthesis of N-acetylglutamate from glutamate and acetyl-CoA as the acetyl donor, and of ornithine by transacetylation between N(2)-acetylornithine and glutamate. The polypeptide is Arginine biosynthesis bifunctional protein ArgJ 1 (Streptomyces clavuligerus).